The primary structure comprises 201 residues: Pyridoxal 5'-phosphate synthase subunit PdxT (201 aa).

50-52 is an L-glutamine binding site; the sequence is GES. Catalysis depends on Cys82, which acts as the Nucleophile. L-glutamine contacts are provided by residues Arg115 and 143–144; that span reads IR. Residues His179 and Glu181 each act as charge relay system in the active site.

The protein belongs to the glutaminase PdxT/SNO family. In the presence of PdxS, forms a dodecamer of heterodimers. Only shows activity in the heterodimer.

The catalysed reaction is aldehydo-D-ribose 5-phosphate + D-glyceraldehyde 3-phosphate + L-glutamine = pyridoxal 5'-phosphate + L-glutamate + phosphate + 3 H2O + H(+). The enzyme catalyses L-glutamine + H2O = L-glutamate + NH4(+). Its pathway is cofactor biosynthesis; pyridoxal 5'-phosphate biosynthesis. In terms of biological role, catalyzes the hydrolysis of glutamine to glutamate and ammonia as part of the biosynthesis of pyridoxal 5'-phosphate. The resulting ammonia molecule is channeled to the active site of PdxS. The chain is Pyridoxal 5'-phosphate synthase subunit PdxT from Deinococcus geothermalis (strain DSM 11300 / CIP 105573 / AG-3a).